Consider the following 297-residue polypeptide: HTH-type transcriptional regulator ArgP (297 aa).

Residues 4 to 60 enclose the HTH lysR-type domain; the sequence is PDYRTLQALDAVIRERGFERAAQKLCITQSAVSQRIKQLENLFGQPLLVRTVPPRPT. The segment at residues 21-40 is a DNA-binding region (H-T-H motif); sequence FERAAQKLCITQSAVSQRIK.

The protein belongs to the LysR transcriptional regulatory family. Homodimer.

In terms of biological role, controls the transcription of genes involved in arginine and lysine metabolism. The sequence is that of HTH-type transcriptional regulator ArgP from Serratia proteamaculans (strain 568).